The primary structure comprises 289 residues: Ribosomal RNA small subunit methyltransferase A (289 aa).

S-adenosyl-L-methionine-binding residues include Asn-28, Leu-30, Gly-55, Glu-76, Asp-101, and Asn-125.

The protein belongs to the class I-like SAM-binding methyltransferase superfamily. rRNA adenine N(6)-methyltransferase family. RsmA subfamily.

It is found in the cytoplasm. It catalyses the reaction adenosine(1518)/adenosine(1519) in 16S rRNA + 4 S-adenosyl-L-methionine = N(6)-dimethyladenosine(1518)/N(6)-dimethyladenosine(1519) in 16S rRNA + 4 S-adenosyl-L-homocysteine + 4 H(+). In terms of biological role, specifically dimethylates two adjacent adenosines (A1518 and A1519) in the loop of a conserved hairpin near the 3'-end of 16S rRNA in the 30S particle. May play a critical role in biogenesis of 30S subunits. The polypeptide is Ribosomal RNA small subunit methyltransferase A (Clostridioides difficile (strain 630) (Peptoclostridium difficile)).